Consider the following 209-residue polypeptide: ATP phosphoribosyltransferase (209 aa).

It belongs to the ATP phosphoribosyltransferase family. Short subfamily. In terms of assembly, heteromultimer composed of HisG and HisZ subunits.

The protein resides in the cytoplasm. It catalyses the reaction 1-(5-phospho-beta-D-ribosyl)-ATP + diphosphate = 5-phospho-alpha-D-ribose 1-diphosphate + ATP. It functions in the pathway amino-acid biosynthesis; L-histidine biosynthesis; L-histidine from 5-phospho-alpha-D-ribose 1-diphosphate: step 1/9. Catalyzes the condensation of ATP and 5-phosphoribose 1-diphosphate to form N'-(5'-phosphoribosyl)-ATP (PR-ATP). Has a crucial role in the pathway because the rate of histidine biosynthesis seems to be controlled primarily by regulation of HisG enzymatic activity. This Caldicellulosiruptor bescii (strain ATCC BAA-1888 / DSM 6725 / KCTC 15123 / Z-1320) (Anaerocellum thermophilum) protein is ATP phosphoribosyltransferase.